Here is a 193-residue protein sequence, read N- to C-terminus: Acyl carrier protein phosphodiesterase (193 aa).

The protein belongs to the AcpH family.

It carries out the reaction holo-[ACP] + H2O = apo-[ACP] + (R)-4'-phosphopantetheine + H(+). Converts holo-ACP to apo-ACP by hydrolytic cleavage of the phosphopantetheine prosthetic group from ACP. This chain is Acyl carrier protein phosphodiesterase, found in Escherichia coli O139:H28 (strain E24377A / ETEC).